The following is a 335-amino-acid chain: Phenylalanine--tRNA ligase alpha subunit (335 aa).

Glu262 contributes to the Mg(2+) binding site.

It belongs to the class-II aminoacyl-tRNA synthetase family. Phe-tRNA synthetase alpha subunit type 1 subfamily. Tetramer of two alpha and two beta subunits. Requires Mg(2+) as cofactor.

Its subcellular location is the cytoplasm. It catalyses the reaction tRNA(Phe) + L-phenylalanine + ATP = L-phenylalanyl-tRNA(Phe) + AMP + diphosphate + H(+). This is Phenylalanine--tRNA ligase alpha subunit from Prochlorococcus marinus (strain NATL2A).